The sequence spans 60 residues: UPF0434 protein Bpro_2950 (60 aa).

It belongs to the UPF0434 family.

The sequence is that of UPF0434 protein Bpro_2950 from Polaromonas sp. (strain JS666 / ATCC BAA-500).